The following is a 186-amino-acid chain: Peptidyl-tRNA hydrolase (186 aa).

Tyr14 is a tRNA binding site. His19 functions as the Proton acceptor in the catalytic mechanism. TRNA is bound by residues Tyr61, Asn63, and Asn107.

Belongs to the PTH family. Monomer.

The protein localises to the cytoplasm. It carries out the reaction an N-acyl-L-alpha-aminoacyl-tRNA + H2O = an N-acyl-L-amino acid + a tRNA + H(+). Hydrolyzes ribosome-free peptidyl-tRNAs (with 1 or more amino acids incorporated), which drop off the ribosome during protein synthesis, or as a result of ribosome stalling. Its function is as follows. Catalyzes the release of premature peptidyl moieties from peptidyl-tRNA molecules trapped in stalled 50S ribosomal subunits, and thus maintains levels of free tRNAs and 50S ribosomes. The sequence is that of Peptidyl-tRNA hydrolase from Helicobacter pylori (strain P12).